A 98-amino-acid polypeptide reads, in one-letter code: Beta-elicitin DRE-beta (98 aa).

3 disulfide bridges follow: Cys3–Cys71, Cys27–Cys56, and Cys51–Cys95.

Belongs to the elicitin family.

The protein localises to the secreted. In terms of biological role, induces local and distal defense responses (incompatible hypersensitive reaction) in plants from the solanaceae and cruciferae families. Elicits leaf necrosis and causes the accumulation of pathogenesis-related proteins. Might interact with the lipidic molecules of the plasma membrane. The sequence is that of Beta-elicitin DRE-beta from Phytophthora drechsleri.